A 1242-amino-acid chain; its full sequence is ATP-dependent RNA helicase DHX8 (1242 aa).

Disordered stretches follow at residues 75 to 283 (RPSR…DDPE) and 354 to 449 (SMKE…GLLP). Composition is skewed to basic and acidic residues over residues 87-97 (TVGDKKEDKKS), 113-141 (YSKK…KTDM), and 180-196 (RDRD…DRHS). 2 stretches are compositionally biased toward basic residues: residues 197 to 222 (DRRR…RRSR) and 232 to 252 (DRRH…RSRS). Basic and acidic residues predominate over residues 253–269 (RSTERRDRRDRSRDCSE). An S1 motif domain is found at 285-356 (GKIYSGKIAN…TGQKVSLSMK (72 aa)). The span at 388 to 399 (FSSSTSMLNLQG) shows a compositional bias: polar residues. Over residues 439 to 449 (PDFDEETGLLP) the composition is skewed to acidic residues. The region spanning 596–759 (IKAVTDNQIL…FFKAPIFTIP (164 aa)) is the Helicase ATP-binding domain. An ATP-binding site is contributed by 609 to 616 (GETGSGKT). Positions 706–709 (DEAH) match the DEAH box motif. Positions 777-957 (YLDASLITVM…TTVLQLKTMG (181 aa)) constitute a Helicase C-terminal domain.

Belongs to the DEAD box helicase family. DEAH subfamily. DDX8/PRP22 sub-subfamily. Identified in the spliceosome C complex.

The protein localises to the nucleus. It catalyses the reaction ATP + H2O = ADP + phosphate + H(+). Functionally, involved in pre-mRNA splicing as component of the spliceosome. Facilitates nuclear export of spliced mRNA by releasing the RNA from the spliceosome. Before and after egg-chamber formation, required for nurse-cell chromatin dispersal (NCCD) probably by playing a role in spliceosome localization to chromatin/interchromatin spaces. This chain is ATP-dependent RNA helicase DHX8, found in Drosophila melanogaster (Fruit fly).